A 30-amino-acid polypeptide reads, in one-letter code: Small toxic protein BsrE (30 aa).

A helical membrane pass occupies residues 4-24; sequence FQALMLMLAIGSFIIALLTYI.

The protein localises to the cell membrane. In terms of biological role, toxic component of a type I toxin-antitoxin (TA) system; overexpression in the absence of cognate antisense antitoxin SR5 RNA leads to cell lysis. Base pairing occurs between the 3' UTRs of bsrE mRNA and SR5 RNA which leads to bsrE mRNA degradation initiated by RNase III (rnc) and RNase J1 (rnjA). Genetic evidence suggests an unidentified RNA-binding protein may exist that promotes TA RNA interaction. In Bacillus subtilis (strain 168), this protein is Small toxic protein BsrE.